The primary structure comprises 1528 residues: Zinc finger FYVE domain-containing protein 16 (1528 aa).

At Ser120 the chain carries Phosphoserine. Positions 629–664 (TQAVGGARPKQLLSLPPGTRSSKELNKPDVVDVPES) are disordered. Residues 649–658 (SSKELNKPDV) show a composition bias toward basic and acidic residues. An FYVE-type zinc finger spans residues 735 to 793 (DSEAPNCMNCQVKFTFTKRRHHCRACGKVFCGVCCNRKCKLQYLEKEARVCVICYETIN). Residues Cys741, Cys744, Cys757, Cys760, Cys765, Cys768, Cys785, and Cys788 each coordinate Zn(2+). A phosphoserine mark is found at Ser803, Ser833, Ser884, and Ser927. The segment at 819 to 849 (TDQPLQETQTSSTPSPTTLPISALKQPNVEG) is disordered. Residues 821–838 (QPLQETQTSSTPSPTTLP) are compositionally biased toward low complexity. The disordered stretch occupies residues 928–949 (PTCHTAPVERLPGNTGTEGLPM).

In terms of assembly, interacts (via C-terminus) with TOM1 (via C-terminus); interaction is required to target TOM1 to endosomes. Does not interact with TOM1L1 or TOM1L2.

The protein resides in the cytoplasm. The protein localises to the early endosome membrane. Its function is as follows. May be involved in regulating membrane trafficking in the endosomal pathway. Overexpression induces endosome aggregation. Required to target TOM1 to endosomes. The chain is Zinc finger FYVE domain-containing protein 16 (Zfyve16) from Mus musculus (Mouse).